Consider the following 406-residue polypeptide: Imidazolonepropionase (406 aa).

Fe(3+)-binding residues include His-65 and His-67. The Zn(2+) site is built by His-65 and His-67. 4-imidazolone-5-propanoate is bound by residues Arg-74, Tyr-137, and His-170. Tyr-137 contributes to the N-formimidoyl-L-glutamate binding site. His-235 lines the Fe(3+) pocket. His-235 contributes to the Zn(2+) binding site. Residue Gln-238 coordinates 4-imidazolone-5-propanoate. A Fe(3+)-binding site is contributed by Asp-310. A Zn(2+)-binding site is contributed by Asp-310. N-formimidoyl-L-glutamate-binding residues include Asn-312 and Gly-314. Thr-315 serves as a coordination point for 4-imidazolone-5-propanoate.

Belongs to the metallo-dependent hydrolases superfamily. HutI family. Zn(2+) serves as cofactor. It depends on Fe(3+) as a cofactor.

It localises to the cytoplasm. The catalysed reaction is 4-imidazolone-5-propanoate + H2O = N-formimidoyl-L-glutamate. It functions in the pathway amino-acid degradation; L-histidine degradation into L-glutamate; N-formimidoyl-L-glutamate from L-histidine: step 3/3. Its function is as follows. Catalyzes the hydrolytic cleavage of the carbon-nitrogen bond in imidazolone-5-propanoate to yield N-formimidoyl-L-glutamate. It is the third step in the universal histidine degradation pathway. In Vibrio vulnificus (strain YJ016), this protein is Imidazolonepropionase.